The following is a 460-amino-acid chain: Piperamide synthase (460 aa).

Positions 1 to 23 (MASSQLEFNVERKQPELLGPAEP) are disordered. Residues His168 and Asp383 each act as proton acceptor in the active site. The Microbody targeting signal signature appears at 458–460 (SRM).

Belongs to the plant acyltransferase family. In terms of assembly, monomer. As to expression, confined to immature fruits perisperm. Also detectable in roots.

It is found in the cytoplasm. It carries out the reaction piperidine + (E,E)-piperoyl-CoA = piperine + CoA + H(+). It functions in the pathway aromatic compound metabolism. Functionally, involved in the biosynthesis of aromatic piperamides natural products such as piperine (1-piperoyl-piperidine), the pungent principle contributing, together with several terpenoids, to the aromatic properties of black pepper fruits, and displaying numerous pharmacological activities such as antiproliferative, antitumor, antiangiogenesis, antioxidant, antidiabetic, antiobesity, cardioprotective, antimicrobial, antiaging, and immunomodulatory effects. Can use piperidine and benzylamine as acceptors and various CoA-esters with aliphatic and aromatic amines as CoA-donors, including piperoyl-CoA, hexanoyl-CoA and octanoyl-CoA, and, to a lower extent, benzoyl-CoA. Mediates the conversion of piperidine to three piperine isomers in the presence of piperoyl-CoA. Its ability to convert in vitro piperidine to hexanoylpiperidine in the presence of hexanoyl-CoA, and to octanoylpiperidine in the presence of octanoyl-CoA is not confirmed in vivo according to fruits metabolome analysis. In Piper nigrum (Black pepper), this protein is Piperamide synthase.